The following is a 436-amino-acid chain: uncharacterized protein (436 aa).

The signal sequence occupies residues 1-20 (MKCAVAILLVCLTLQQAAYG). Coiled coils occupy residues 25–87 (EEVK…ALRN), 154–207 (MRKT…NSVE), and 247–329 (ESWG…ASLL). A compositionally biased stretch (acidic residues) spans 371 to 390 (EEEIAPSTEEDGSEELEADS). A disordered region spans residues 371–419 (EEEIAPSTEEDGSEELEADSYDSKVGGESPISQRTEERQGAEERSRLRR). The span at 404–415 (RTEERQGAEERS) shows a compositional bias: basic and acidic residues.

In terms of tissue distribution, component of the acid-insoluble organic matrix of the aragonitic skeleton (at protein level).

The protein localises to the secreted. This is an uncharacterized protein from Acropora millepora (Staghorn coral).